Here is a 318-residue protein sequence, read N- to C-terminus: Sensor histidine kinase NatK (318 aa).

3 helical membrane passes run 4 to 24 (LFQCLYLILFSFICYQGAAAF), 27 to 47 (STAASWLAAALGAAAAGLYIW), and 72 to 82 (VGVVLIGTDIM). In terms of domain architecture, Histidine kinase spans 132–318 (RNHDTMKHIT…RLEIKIPFQK (187 aa)). Phosphohistidine; by autocatalysis is present on His134.

Its subcellular location is the cell membrane. The enzyme catalyses ATP + protein L-histidine = ADP + protein N-phospho-L-histidine.. In terms of biological role, member of the two-component regulatory system NatK/NatR that positively regulates the expression of the natAB operon. Potentially phosphorylates NatR. The chain is Sensor histidine kinase NatK from Bacillus subtilis (strain 168).